We begin with the raw amino-acid sequence, 370 residues long: 3-dehydroquinate synthase (370 aa).

NAD(+) is bound by residues 112-116 (GVIGD), 136-137 (TT), Lys149, Lys158, and 176-179 (TLKT). 3 residues coordinate Zn(2+): Glu191, His256, and His273.

Belongs to the sugar phosphate cyclases superfamily. Dehydroquinate synthase family. The cofactor is Co(2+). Zn(2+) serves as cofactor. Requires NAD(+) as cofactor.

It is found in the cytoplasm. It catalyses the reaction 7-phospho-2-dehydro-3-deoxy-D-arabino-heptonate = 3-dehydroquinate + phosphate. It functions in the pathway metabolic intermediate biosynthesis; chorismate biosynthesis; chorismate from D-erythrose 4-phosphate and phosphoenolpyruvate: step 2/7. In terms of biological role, catalyzes the conversion of 3-deoxy-D-arabino-heptulosonate 7-phosphate (DAHP) to dehydroquinate (DHQ). The chain is 3-dehydroquinate synthase from Prochlorococcus marinus (strain MIT 9211).